The primary structure comprises 66 residues: Small ribosomal subunit protein eS27 (66 aa).

4 residues coordinate Zn(2+): Cys21, Cys24, Cys40, and Cys43. The C4-type zinc-finger motif lies at 21-43 (CPNCGNEQTIFSHATFPVRCLSC).

It belongs to the eukaryotic ribosomal protein eS27 family. In terms of assembly, part of the 30S ribosomal subunit. The cofactor is Zn(2+).

This Saccharolobus solfataricus (strain ATCC 35092 / DSM 1617 / JCM 11322 / P2) (Sulfolobus solfataricus) protein is Small ribosomal subunit protein eS27.